Reading from the N-terminus, the 357-residue chain is Serine protease 1 (357 aa).

Residues 1-29 (MRRTTRARTGLSALLLAASLGLGAAPAGA) form the signal peptide. A propeptide spanning residues 30-170 (DAPQRPAPTP…TRVPGVFQRE (141 aa)) is cleaved from the precursor. An intrachain disulfide couples Cys-184 to Cys-204. Residues His-203, Asp-232, and Ser-313 each act as charge relay system in the active site. The cysteines at positions 307 and 333 are disulfide-linked.

This sequence belongs to the peptidase S1 family.

The protein localises to the secreted. Its function is as follows. Serine protease that preferentially cleaves peptide bonds on the C-terminal side of aspartate and glutamate with a 10-fold higher reactivity for a glutamyl bond than an aspartyl bond. This Streptomyces fradiae (Streptomyces roseoflavus) protein is Serine protease 1.